We begin with the raw amino-acid sequence, 95 residues long: Aspartyl/glutamyl-tRNA(Asn/Gln) amidotransferase subunit C (95 aa).

Belongs to the GatC family. Heterotrimer of A, B and C subunits.

It carries out the reaction L-glutamyl-tRNA(Gln) + L-glutamine + ATP + H2O = L-glutaminyl-tRNA(Gln) + L-glutamate + ADP + phosphate + H(+). The enzyme catalyses L-aspartyl-tRNA(Asn) + L-glutamine + ATP + H2O = L-asparaginyl-tRNA(Asn) + L-glutamate + ADP + phosphate + 2 H(+). Allows the formation of correctly charged Asn-tRNA(Asn) or Gln-tRNA(Gln) through the transamidation of misacylated Asp-tRNA(Asn) or Glu-tRNA(Gln) in organisms which lack either or both of asparaginyl-tRNA or glutaminyl-tRNA synthetases. The reaction takes place in the presence of glutamine and ATP through an activated phospho-Asp-tRNA(Asn) or phospho-Glu-tRNA(Gln). This chain is Aspartyl/glutamyl-tRNA(Asn/Gln) amidotransferase subunit C, found in Shouchella clausii (strain KSM-K16) (Alkalihalobacillus clausii).